Here is a 921-residue protein sequence, read N- to C-terminus: Translation initiation factor IF-2 (921 aa).

3 disordered regions span residues 81-118, 175-194, and 219-301; these read AVAE…AAAP, PVVE…ANQA, and VAPA…KKHE. Residues 96 to 112 are compositionally biased toward pro residues; it reads PAAPTPPEVPAAAPAPP. Low complexity predominate over residues 229 to 241; the sequence is RPSPAAGAPSRGA. The span at 292-301 shows a compositional bias: basic and acidic residues; that stretch reads KKKEQPKKHE. Residues 421–590 form the tr-type G domain; sequence KRPPVVTIMG…LLQADLMELK (170 aa). The tract at residues 430 to 437 is G1; the sequence is GHVDHGKT. 430–437 contacts GTP; that stretch reads GHVDHGKT. A G2 region spans residues 455–459; it reads GITQH. The tract at residues 476–479 is G3; it reads DTPG. GTP is bound by residues 476–480 and 530–533; these read DTPGH and NKID. The interval 530-533 is G4; the sequence is NKID. The tract at residues 566-568 is G5; sequence SAK.

It belongs to the TRAFAC class translation factor GTPase superfamily. Classic translation factor GTPase family. IF-2 subfamily.

The protein resides in the cytoplasm. In terms of biological role, one of the essential components for the initiation of protein synthesis. Protects formylmethionyl-tRNA from spontaneous hydrolysis and promotes its binding to the 30S ribosomal subunits. Also involved in the hydrolysis of GTP during the formation of the 70S ribosomal complex. The polypeptide is Translation initiation factor IF-2 (Pelobacter propionicus (strain DSM 2379 / NBRC 103807 / OttBd1)).